Reading from the N-terminus, the 313-residue chain is Putative S-adenosyl-L-methionine-dependent methyltransferase MAV_5149 (313 aa).

Residues D135 and 164 to 165 (DL) contribute to the S-adenosyl-L-methionine site.

Belongs to the UPF0677 family.

Its function is as follows. Exhibits S-adenosyl-L-methionine-dependent methyltransferase activity. The protein is Putative S-adenosyl-L-methionine-dependent methyltransferase MAV_5149 of Mycobacterium avium (strain 104).